A 432-amino-acid polypeptide reads, in one-letter code: Glutamyl-tRNA reductase (432 aa).

Substrate contacts are provided by residues 55-58, serine 114, 119-121, and glutamine 125; these read TCNR and ETQ. The Nucleophile role is filled by cysteine 56. An NADP(+)-binding site is contributed by 194-199; it reads GAGEMI.

This sequence belongs to the glutamyl-tRNA reductase family. Homodimer.

It catalyses the reaction (S)-4-amino-5-oxopentanoate + tRNA(Glu) + NADP(+) = L-glutamyl-tRNA(Glu) + NADPH + H(+). It functions in the pathway porphyrin-containing compound metabolism; protoporphyrin-IX biosynthesis; 5-aminolevulinate from L-glutamyl-tRNA(Glu): step 1/2. Functionally, catalyzes the NADPH-dependent reduction of glutamyl-tRNA(Glu) to glutamate 1-semialdehyde (GSA). This is Glutamyl-tRNA reductase from Burkholderia multivorans (strain ATCC 17616 / 249).